A 449-amino-acid chain; its full sequence is Heterogeneous nuclear ribonucleoprotein H (449 aa).

Met1 is subject to N-acetylmethionine. The residue at position 2 (Met2) is an N-acetylmethionine; in Heterogeneous nuclear ribonucleoprotein H, N-terminally processed. In terms of domain architecture, RRM 1 spans Phe11–Asn90. The residue at position 23 (Ser23) is a Phosphoserine. A Glycyl lysine isopeptide (Lys-Gly) (interchain with G-Cter in SUMO2) cross-link involves residue Lys35. Phosphoserine is present on residues Ser54 and Ser63. Glycyl lysine isopeptide (Lys-Gly) (interchain with G-Cter in SUMO2) cross-links involve residues Lys87 and Lys98. The region spanning Gly111 to Arg188 is the RRM 2 domain. The residue at position 233 (Arg233) is a Dimethylated arginine; alternate. Arg233 bears the Omega-N-methylarginine; alternate mark. The 1-1 repeat unit spans residues Gly234–Tyr249. The segment at Gly234–Tyr433 is 2 X 16 AA Gly-rich approximate repeats. Position 246 is a phosphotyrosine (Tyr246). Residues His289 to Thr364 form the RRM 3 domain. Ser310 carries the phosphoserine modification. A run of 3 repeats spans residues His354–Tyr372, His374–Tyr392, and Gly418–Tyr433. The interval His354 to Tyr392 is 2 X 19 AA perfect repeats.

Part of a ternary complex containing FUBP2, PTBP1, PTBP2 and HNRNPH1. Identified in the spliceosome C complex. Interacts with IGF2BP1. Interacts with CUGBP1; the interaction is RNA-dependent. Interacts with MBNL1; the interaction in RNA-independent.

Its subcellular location is the nucleus. It is found in the nucleoplasm. This protein is a component of the heterogeneous nuclear ribonucleoprotein (hnRNP) complexes which provide the substrate for the processing events that pre-mRNAs undergo before becoming functional, translatable mRNAs in the cytoplasm. Mediates pre-mRNA alternative splicing regulation. Inhibits, together with CUGBP1, insulin receptor (IR) pre-mRNA exon 11 inclusion in myoblast. Binds to the IR RNA. Binds poly(RG). This chain is Heterogeneous nuclear ribonucleoprotein H (Hnrnph1), found in Mus musculus (Mouse).